Consider the following 427-residue polypeptide: MRHLFNTDAEIYEAIVKEYERQFYHLELIASENFTSLAVMEAQGSVMTNKYAEGLPHKRYYGGCEFVDIAEDLAIERAKALFDAEHANVQPHSGTQANMAVYMAVLKPGDTIMGMDLSHGGHLTHGAKVNFSGKIYNAVYYGVHPETHLIDYDQLYRLAKEHKPKLIVGGASAYPRVIDWAKLREIADSVGAYLMVDMAHYAGLIAGGVYPNPVPYAHFVTSTTHKTLRGPRSGFILCKKEFAKDIDKSVFPGIQGGPLMHVIAAKAVAFKEAMSQEFKEYARQVVANARVLAEEFIKEGFKVVSGGTDSHIVLLDLRDTGLTGREVEEALGKANITVNKNAVPFDPLPPVKTSGIRLGTPAMTTRGMKEDQMRIIARLISKVIKNIGDEKVIEYVRQEVIEMCEQFPLYPELREEINHLAKIKATY.

(6S)-5,6,7,8-tetrahydrofolate is bound by residues Leu-117 and 121–123 (GHL). The residue at position 226 (Lys-226) is an N6-(pyridoxal phosphate)lysine.

Belongs to the SHMT family. In terms of assembly, homodimer. The cofactor is pyridoxal 5'-phosphate.

The protein localises to the cytoplasm. The enzyme catalyses (6R)-5,10-methylene-5,6,7,8-tetrahydrofolate + glycine + H2O = (6S)-5,6,7,8-tetrahydrofolate + L-serine. It carries out the reaction L-threonine = acetaldehyde + glycine. The catalysed reaction is L-allo-threonine = acetaldehyde + glycine. It participates in one-carbon metabolism; tetrahydrofolate interconversion. The protein operates within amino-acid biosynthesis; glycine biosynthesis; glycine from L-serine: step 1/1. Its primary function is to catalyze the reversible interconversion of serine and glycine with tetrahydrofolate (THF) serving as the one-carbon carrier. This reaction serves as the major source of one-carbon groups required for the biosynthesis of purines, thymidylate, methionine, and other important biomolecules. Also exhibits THF-independent aldolase activity toward beta-hydroxyamino acids, producing glycine and aldehydes, via a retro-aldol mechanism. Thus, is able to catalyze the cleavage of L-threonine, L-allo-threonine, L-threo-beta-phenylserine and L-erythro-beta-phenylserine. This second activity is likely to be physiological in H.thermophilus, which is an organism that lacks the ortholog gene for the 'real' threonine aldolase characterized in mesophilic bacteria (LtaE), yeast and plants. In Hydrogenobacter thermophilus (strain DSM 6534 / IAM 12695 / TK-6), this protein is Serine hydroxymethyltransferase.